A 314-amino-acid chain; its full sequence is Splicing factor YJU2 (314 aa).

Residues Cys43, Cys46, Cys80, and Cys83 each contribute to the Zn(2+) site. Disordered stretches follow at residues 178–238 (MSQE…NEVP) and 253–314 (LAGL…DSDS). Positions 200–209 (EEARHRRLLE) are enriched in basic and acidic residues. Phosphoserine is present on residues Ser211, Ser213, and Ser220. A compositionally biased stretch (low complexity) spans 222-232 (PRAAARPNPTA). Residues 290–302 (PTPQTPGTSSLSQ) show a composition bias toward polar residues. 3 positions are modified to phosphoserine: Ser309, Ser312, and Ser314.

It belongs to the CWC16 family. YJU2 subfamily. In terms of assembly, component of the spliceosome. Present in the activated B complex, the catalytically activated B* complex which catalyzes the branching, the catalytic step 1 C complex catalyzing the exon ligation, and the postcatalytic P complex containing the ligated exons (mRNA) and the excised lariat intron.

It localises to the nucleus. Its function is as follows. Part of the spliceosome which catalyzes two sequential transesterification reactions, first the excision of the non-coding intron from pre-mRNA and then the ligation of the coding exons to form the mature mRNA. Plays a role in stabilizing the structure of the spliceosome catalytic core and docking of the branch helix into the active site, producing 5'-exon and lariat intron-3'-intermediates. May protect cells from TP53-dependent apoptosis upon dsDNA break damage through association with PRP19-CD5L complex. In Mus musculus (Mouse), this protein is Splicing factor YJU2.